Here is a 525-residue protein sequence, read N- to C-terminus: Glutamate--cysteine ligase (525 aa).

The protein belongs to the glutamate--cysteine ligase type 1 family. Type 1 subfamily.

The enzyme catalyses L-cysteine + L-glutamate + ATP = gamma-L-glutamyl-L-cysteine + ADP + phosphate + H(+). Its pathway is sulfur metabolism; glutathione biosynthesis; glutathione from L-cysteine and L-glutamate: step 1/2. The chain is Glutamate--cysteine ligase from Alcanivorax borkumensis (strain ATCC 700651 / DSM 11573 / NCIMB 13689 / SK2).